A 429-amino-acid polypeptide reads, in one-letter code: Glutamate-1-semialdehyde 2,1-aminomutase 2 (429 aa).

At Lys-268 the chain carries N6-(pyridoxal phosphate)lysine.

Belongs to the class-III pyridoxal-phosphate-dependent aminotransferase family. HemL subfamily. Homodimer. Pyridoxal 5'-phosphate serves as cofactor.

Its subcellular location is the cytoplasm. It catalyses the reaction (S)-4-amino-5-oxopentanoate = 5-aminolevulinate. It functions in the pathway porphyrin-containing compound metabolism; protoporphyrin-IX biosynthesis; 5-aminolevulinate from L-glutamyl-tRNA(Glu): step 2/2. This chain is Glutamate-1-semialdehyde 2,1-aminomutase 2, found in Staphylococcus carnosus (strain TM300).